The chain runs to 388 residues: Splicing factor 3B subunit 4 (388 aa).

2 consecutive RRM domains span residues alanine 13–alanine 91 and alanine 100–lysine 179. The interval glutamine 244–serine 388 is disordered. 3 stretches are compositionally biased toward pro residues: residues proline 261 to phenylalanine 325, methionine 333 to tyrosine 355, and methionine 362 to serine 388.

This sequence belongs to the SF3B4 family.

It localises to the nucleus. Its function is as follows. Subunit of the splicing factor SF3B required for 'A' complex assembly formed by the stable binding of U2 snRNP to the branchpoint sequence (BPS) in pre-mRNA. Sequence independent binding of SF3A/SF3B complex upstream of the branch site is essential, it may anchor U2 snRNP to the pre-mRNA. May also be involved in the assembly of the 'E' complex. SF3B4 has been found in complex 'B' and 'C' as well. Belongs also to the minor U12-dependent spliceosome, which is involved in the splicing of rare class of nuclear pre-mRNA intron. The chain is Splicing factor 3B subunit 4 (sap-49) from Caenorhabditis elegans.